Here is a 241-residue protein sequence, read N- to C-terminus: DNA repair protein RecO (241 aa).

Belongs to the RecO family.

In terms of biological role, involved in DNA repair and RecF pathway recombination. This chain is DNA repair protein RecO, found in Phocaeicola vulgatus (strain ATCC 8482 / DSM 1447 / JCM 5826 / CCUG 4940 / NBRC 14291 / NCTC 11154) (Bacteroides vulgatus).